Consider the following 158-residue polypeptide: NADPH-dependent 7-cyano-7-deazaguanine reductase (158 aa).

Positions 1–13 (MAKRSNTTMTSAG) are enriched in polar residues. The tract at residues 1–37 (MAKRSNTTMTSAGLQLGREVAPPDSPETAKLDRVPNP) is disordered. Residues 27-37 (ETAKLDRVPNP) show a composition bias toward basic and acidic residues. Catalysis depends on cysteine 56, which acts as the Thioimide intermediate. Aspartate 63 (proton donor) is an active-site residue. Substrate is bound by residues 78 to 80 (VES) and 97 to 98 (HE).

This sequence belongs to the GTP cyclohydrolase I family. QueF type 1 subfamily.

It is found in the cytoplasm. It catalyses the reaction 7-aminomethyl-7-carbaguanine + 2 NADP(+) = 7-cyano-7-deazaguanine + 2 NADPH + 3 H(+). It participates in tRNA modification; tRNA-queuosine biosynthesis. Catalyzes the NADPH-dependent reduction of 7-cyano-7-deazaguanine (preQ0) to 7-aminomethyl-7-deazaguanine (preQ1). This is NADPH-dependent 7-cyano-7-deazaguanine reductase from Bradyrhizobium sp. (strain ORS 278).